The primary structure comprises 318 residues: Malate dehydrogenase (318 aa).

NAD(+) is bound by residues 11-17 (GAGGNVG) and Asp-37. 2 residues coordinate substrate: Arg-86 and Arg-92. NAD(+)-binding positions include Asn-99 and 122–124 (VTN). Substrate-binding residues include Asn-124 and Arg-155. His-179 acts as the Proton acceptor in catalysis.

It belongs to the LDH/MDH superfamily. MDH type 3 family.

It catalyses the reaction (S)-malate + NAD(+) = oxaloacetate + NADH + H(+). Functionally, catalyzes the reversible oxidation of malate to oxaloacetate. This chain is Malate dehydrogenase, found in Nitratiruptor sp. (strain SB155-2).